The sequence spans 117 residues: Large ribosomal subunit protein uL18 (117 aa).

The protein belongs to the universal ribosomal protein uL18 family. Part of the 50S ribosomal subunit; part of the 5S rRNA/L5/L18/L25 subcomplex. Contacts the 5S and 23S rRNAs.

In terms of biological role, this is one of the proteins that bind and probably mediate the attachment of the 5S RNA into the large ribosomal subunit, where it forms part of the central protuberance. The protein is Large ribosomal subunit protein uL18 of Halorhodospira halophila (strain DSM 244 / SL1) (Ectothiorhodospira halophila (strain DSM 244 / SL1)).